The sequence spans 428 residues: AP-1 complex subunit mu-2 (428 aa).

One can recognise an MHD domain in the interval 170 to 426 (KNEVFLDVIE…ITMAGEYELR (257 aa)).

It belongs to the adaptor complexes medium subunit family. As to quaternary structure, adaptor protein complex 1 (AP-1) is a heterotetramer composed of two large adaptins (gamma-type subunit and beta-type subunit), a medium adaptin (mu-type subunit) and a small adaptin (sigma-type subunit). Ubiquitous.

It localises to the golgi apparatus. The protein localises to the trans-Golgi network membrane. Its subcellular location is the early endosome membrane. It is found in the cytoplasmic vesicle. The protein resides in the clathrin-coated vesicle membrane. Subunit of clathrin-associated adaptor protein complex 1 that plays a role in protein sorting at the trans-Golgi network and early endosomes (TGN/EE). The AP complexes mediate the recruitment of clathrin to membranes and the recognition of sorting signals within the cytosolic tails of transmembrane cargo molecules. Required for KNOLLE localization at the cell plate to mediate cytokinesis. Functions redundantly with AP1M1 in multiple post-Golgi trafficking pathways leading from the TGN to the vacuole, the plasma membrane, and the cell-division plane. The polypeptide is AP-1 complex subunit mu-2 (AP1M2) (Arabidopsis thaliana (Mouse-ear cress)).